A 132-amino-acid polypeptide reads, in one-letter code: CLAVATA3/ESR (CLE)-related protein TDIF (132 aa).

The N-terminal stretch at 1 to 26 (MDIDLLWSFGGWFFILFPETINYCMA) is a signal peptide. Residues 42–62 (SCSSLFFVALLIITILITMLQ) form a helical membrane-spanning segment. Residues 68–77 (EVTSLPTHQP) show a composition bias toward polar residues. A disordered region spans residues 68-132 (EVTSLPTHQP…PSGPNPISNR (65 aa)). The segment covering 87–96 (STSSTATTTT) has biased composition (low complexity). Residues 101-111 (KRTHHQSHPKP) show a composition bias toward basic residues. Hydroxyproline occurs at positions 123 and 126. O-linked (Ara...) hydroxyproline glycosylation is present at Pro-126.

This sequence belongs to the CLV3/ESR signal peptide family. In terms of assembly, interacts specifically with the leucine-rich repeat receptor-like protein kinase TDR. The TDIFp peptide contains two hydroxprolines, but hydroxylation had no direct effect on TDIFp activity. In terms of processing, the O-glycosylation (arabinosylation) of the hydroxyproline Pro-126 enhances binding affinity of the TDIFp peptide for its receptor.

It is found in the secreted. It localises to the extracellular space. The protein localises to the cell membrane. Its function is as follows. Extracellular signal peptide that regulates cell fate. Represses tracheary element differentiation but promotes the formation of procambial cells adjacent to phloem cells in the veins. The sequence is that of CLAVATA3/ESR (CLE)-related protein TDIF from Zinnia elegans (Garden zinnia).